The chain runs to 341 residues: tRNA-specific 2-thiouridylase MnmA (341 aa).

ATP is bound by residues 8-15 and M34; that span reads GMSGGVDS. Catalysis depends on C94, which acts as the Nucleophile. A disulfide bridge links C94 with C188. Residue G118 participates in ATP binding. An interaction with tRNA region spans residues 136 to 138; that stretch reads KDQ. The active-site Cysteine persulfide intermediate is the C188. The segment at 290-291 is interaction with tRNA; it reads RY.

This sequence belongs to the MnmA/TRMU family.

It localises to the cytoplasm. It carries out the reaction S-sulfanyl-L-cysteinyl-[protein] + uridine(34) in tRNA + AH2 + ATP = 2-thiouridine(34) in tRNA + L-cysteinyl-[protein] + A + AMP + diphosphate + H(+). Functionally, catalyzes the 2-thiolation of uridine at the wobble position (U34) of tRNA, leading to the formation of s(2)U34. The sequence is that of tRNA-specific 2-thiouridylase MnmA from Sulfurimonas denitrificans (strain ATCC 33889 / DSM 1251) (Thiomicrospira denitrificans (strain ATCC 33889 / DSM 1251)).